A 480-amino-acid chain; its full sequence is Ribulose bisphosphate carboxylase large chain (480 aa).

A propeptide spanning residues Met1–Ser2 is cleaved from the precursor. At Pro3 the chain carries N-acetylproline. Position 14 is an N6,N6,N6-trimethyllysine (Lys14). Asn123 and Thr173 together coordinate substrate. Catalysis depends on Lys175, which acts as the Proton acceptor. Residue Lys177 participates in substrate binding. Mg(2+) contacts are provided by Lys201, Asp203, and Glu204. Residue Lys201 is modified to N6-carboxylysine. His294 (proton acceptor) is an active-site residue. Arg295, His327, and Ser379 together coordinate substrate.

It belongs to the RuBisCO large chain family. Type I subfamily. In terms of assembly, heterohexadecamer of 8 large chains and 8 small chains; disulfide-linked. The disulfide link is formed within the large subunit homodimers. Mg(2+) is required as a cofactor. Post-translationally, the disulfide bond which can form in the large chain dimeric partners within the hexadecamer appears to be associated with oxidative stress and protein turnover.

The protein resides in the plastid. It is found in the chloroplast. It catalyses the reaction 2 (2R)-3-phosphoglycerate + 2 H(+) = D-ribulose 1,5-bisphosphate + CO2 + H2O. The enzyme catalyses D-ribulose 1,5-bisphosphate + O2 = 2-phosphoglycolate + (2R)-3-phosphoglycerate + 2 H(+). Its function is as follows. RuBisCO catalyzes two reactions: the carboxylation of D-ribulose 1,5-bisphosphate, the primary event in carbon dioxide fixation, as well as the oxidative fragmentation of the pentose substrate in the photorespiration process. Both reactions occur simultaneously and in competition at the same active site. This Phalaenopsis aphrodite subsp. formosana (Moth orchid) protein is Ribulose bisphosphate carboxylase large chain.